The primary structure comprises 1154 residues: Caspase recruitment domain-containing protein 11 (1154 aa).

The 93-residue stretch at Glu-18–Glu-110 folds into the CARD domain. Residues Pro-111 to Thr-128 are linker. Residues Phe-130 to Leu-449 adopt a coiled-coil conformation. 2 positions are modified to phosphoserine: Ser-448 and Ser-466. The inhibitory domain (ID) stretch occupies residues Pro-450–Val-666. Residues Gln-460–Glu-626 form a disordered region. The segment covering Glu-473–Pro-484 has biased composition (acidic residues). A Phosphoserine modification is found at Ser-512. A compositionally biased stretch (basic and acidic residues) spans Arg-518–Glu-529. A compositionally biased stretch (polar residues) spans Ala-534 to Ser-562. Ser-535 is modified (phosphoserine). Position 559 is a phosphoserine; by PKC/PRKCB and PKC/PRKCQ (Ser-559). Basic and acidic residues predominate over residues Ile-573–Val-587. At Ser-593 the chain carries Phosphoserine. Residues Ser-614–Ser-625 are compositionally biased toward low complexity. Residues Ser-644 and Ser-652 each carry the phosphoserine; by PKC/PRKCB and PKC/PRKCQ modification. The 89-residue stretch at Gln-667 to His-755 folds into the PDZ domain. Phosphoserine occurs at positions 886 and 925. Residues Arg-973–Gly-1140 enclose the Guanylate kinase-like domain.

In terms of assembly, homodimer; disulfide-linked. Homomultimer; polymerizes following activation, forming a nucleating helical template that seeds BCL10-filament formation via a CARD-CARD interaction. Interacts (via CARD domain) with BCL10 (via CARD domain); interaction takes place following CARD11 activation and polymerization, leading to the formation of a filamentous CBM complex assembly. Component of a CBM complex (CARD11-BCL10-MALT1) complex involved in NF-kappa-B activation. Found in a membrane raft complex, at least composed of BCL10, CARD11, DPP4 and IKBKB. Interacts (via PDZ domain) with DPP4 (via cytoplasmic tail). In terms of processing, phosphorylation at Ser-559, Ser-644 and Ser-652 by PRKCB and PRKCQ leads to a shift from an inactive to an active form that activates the NF-kappa-B signaling. In terms of tissue distribution, detected in adult peripheral blood leukocytes, thymus, spleen and liver. Also found in promyelocytic leukemia HL-60 cells, chronic myelogenous leukemia K-562 cells, Burkitt's lymphoma Raji cells and colorectal adenocarcinoma SW480 cells. Not detected in HeLaS3, MOLT-4, A-549 and G431 cells.

The protein resides in the cytoplasm. It localises to the membrane raft. With respect to regulation, maintained in an autoinhibited state via homodimerization in which the CARD domain forms an extensive interaction with the adjacent linker and coiled-coil regions. Activation downstream of T-cell receptor (TCR) by phosphorylation by PRKCB and PRKCQ triggers CARD11 homooligomerization and BCL10 recruitment, followed by activation of NF-kappa-B. Adapter protein that plays a key role in adaptive immune response by transducing the activation of NF-kappa-B downstream of T-cell receptor (TCR) and B-cell receptor (BCR) engagement. Transduces signals downstream TCR or BCR activation via the formation of a multiprotein complex together with BCL10 and MALT1 that induces NF-kappa-B and MAP kinase p38 (MAPK11, MAPK12, MAPK13 and/or MAPK14) pathways. Upon activation in response to TCR or BCR triggering, CARD11 homooligomerizes to form a nucleating helical template that recruits BCL10 via CARD-CARD interaction, thereby promoting polymerization of BCL10 and subsequent recruitment of MALT1: this leads to I-kappa-B kinase (IKK) phosphorylation and degradation, and release of NF-kappa-B proteins for nuclear translocation. Its binding to DPP4 induces T-cell proliferation and NF-kappa-B activation in a T-cell receptor/CD3-dependent manner. Promotes linear ubiquitination of BCL10 by promoting the targeting of BCL10 to RNF31/HOIP. Stimulates the phosphorylation of BCL10. Also activates the TORC1 signaling pathway. In Homo sapiens (Human), this protein is Caspase recruitment domain-containing protein 11.